The primary structure comprises 274 residues: Prothoracicostatic peptide (274 aa).

The N-terminal stretch at 1–19 is a signal peptide; the sequence is MRWCLFALWVFGVATVVTA. A propeptide spanning residues 20 to 67 is cleaved from the precursor; sequence AEEPHHDAAPQTDNEVDLTEDDKRAWSSLHSGWAKRAWQDMSSAWGKR. Trp-76 is modified (tryptophan amide). Positions 77 to 91 are excised as a propeptide; it reads GKRGWQDLNSAWGKR. Trp-100 carries the tryptophan amide modification. Positions 101 to 136 are excised as a propeptide; sequence GKRGWQDLNSAWGKRDDDEAMEKKSWQDLNSVWGKR. At Trp-145 the chain carries Tryptophan amide. Positions 146–148 are excised as a propeptide; sequence GKR. Trp-157 is subject to Tryptophan amide. Residues 158–172 constitute a propeptide that is removed on maturation; it reads GKRGWNDISSVWGKR. Tryptophan amide is present on Trp-181. A propeptide spanning residues 182–274 is cleaved from the precursor; that stretch reads GKRAWQDMSS…NEHSATTNEA (93 aa).

It localises to the secreted. Inhibits ecdysteroid biosynthesis in the prothoracic gland of fifth instar larvae, with maximum inhibition during the spinning stage. When administered to day 8 fifth instar larvae it produces a significant delay in the commencement spinning behavior. The polypeptide is Prothoracicostatic peptide (Bombyx mori (Silk moth)).